The following is a 717-amino-acid chain: Choline transporter-like protein 5 (717 aa).

A disordered region spans residues 1–24 (MNDTEKPADTASEEEDFGDPRTYD). Residues 1 to 38 (MNDTEKPADTASEEEDFGDPRTYDPDFKGPVSNRSCTD) are Cytoplasmic-facing. A helical transmembrane segment spans residues 39-59 (VLCCMIFLLCIVGYIVLGLVA). At 60-242 (WVHGDPRRAA…KVFEDYATTW (183 aa)) the chain is on the extracellular side. 2 N-linked (GlcNAc...) asparagine glycosylation sites follow: Asn-88 and Asn-190. Residues 243–263 (YWILIGLMIAMVLSWIFLILL) form a helical membrane-spanning segment. The Cytoplasmic segment spans residues 264 to 265 (RF). Residues 266–286 (IAGCLFWVFMIGVIGIIGYGI) form a helical membrane-spanning segment. The Extracellular segment spans residues 287–325 (WHCYQQYTNLQEHPRSVLTVYDIGIQTNISMYFELQQTW). Residue Asn-314 is glycosylated (N-linked (GlcNAc...) asparagine). A helical transmembrane segment spans residues 326–346 (FTLMIILCIIEVIVILMLIFL). At 347–351 (RNRIR) the chain is on the cytoplasmic side. A helical membrane pass occupies residues 352–372 (VAIILLKEGSKAIGYVPSTLV). At 373-374 (YP) the chain is on the extracellular side. Residues 375–395 (ALTFILLSICICYWVVTAVFL) traverse the membrane as a helical segment. Residues 396–460 (ATSGVPVYKV…QYIPTFHVYN (65 aa)) lie on the Cytoplasmic side of the membrane. A helical transmembrane segment spans residues 461–481 (LFVFLWLINFVIALGQCALAG). Residues 482–515 (AFATYYWAMKKPDDIPRYPLFTAFGRAIRYHTGS) are Extracellular-facing. The helical transmembrane segment at 516–536 (LAFGSLIIALIQMFKIVLEYL) threads the bilayer. At 537 to 610 (NHRLKRTENT…KVAVTDEVTY (74 aa)) the chain is on the cytoplasmic side. A helical transmembrane segment spans residues 611-631 (FVLFLGKILVAGSIGVLAFLF). Topologically, residues 632 to 649 (FTQRLPVIAQGPASLNYY) are extracellular. A helical membrane pass occupies residues 650–670 (WVPLLTVILGSYLIAHGFFSV). Residues 671–717 (YAMCVETIFICFLEDLERNDGSTARPYYVSQPLLKIFQEENLQTKQQ) are Cytoplasmic-facing.

Belongs to the CTL (choline transporter-like) family.

It localises to the cell membrane. The enzyme catalyses choline(out) + n H(+)(in) = choline(in) + n H(+)(out). In terms of biological role, choline/H+ antiporter. The chain is Choline transporter-like protein 5 (SLC44A5) from Macaca fascicularis (Crab-eating macaque).